A 108-amino-acid chain; its full sequence is Glutaredoxin 4 (108 aa).

The region spanning 4–106 (FQKIKKQIQD…KLILKVKKKY (103 aa)) is the Glutaredoxin domain. K21 lines the glutathione pocket. C29 contributes to the [2Fe-2S] cluster binding site. Residues R58, F70, and 83–84 (CS) each bind glutathione.

Belongs to the glutaredoxin family. Monothiol subfamily. In terms of assembly, homodimer.

Its subcellular location is the cytoplasm. Monothiol glutaredoxin involved in the biogenesis of iron-sulfur clusters. This chain is Glutaredoxin 4 (grxD), found in Buchnera aphidicola subsp. Acyrthosiphon pisum (strain APS) (Acyrthosiphon pisum symbiotic bacterium).